A 1455-amino-acid chain; its full sequence is Cleavage and polyadenylation specificity factor subunit 1 (1455 aa).

This sequence belongs to the CPSF1 family. As to quaternary structure, component of the cleavage and polyadenylation specificity factor (CPSF) complex, composed of at least Clp, Cpsf73, Cpsf100 and Cpsf160.

It is found in the nucleus. Component of the cleavage and polyadenylation specificity factor (CPSF) complex that plays a key role in pre-mRNA 3'-end formation, recognizing the AAUAAA signal sequence and interacting with poly(A) polymerase and other factors to bring about cleavage and poly(A) addition. This subunit is involved in the RNA recognition step of the polyadenylation reaction. This chain is Cleavage and polyadenylation specificity factor subunit 1 (Cpsf160), found in Drosophila melanogaster (Fruit fly).